The primary structure comprises 520 residues: Cobyric acid synthase (520 aa).

One can recognise a GATase cobBQ-type domain in the interval tryptophan 257 to phenylalanine 451. Cysteine 338 (nucleophile) is an active-site residue. Histidine 443 is an active-site residue.

Belongs to the CobB/CobQ family. CobQ subfamily.

It participates in cofactor biosynthesis; adenosylcobalamin biosynthesis. Catalyzes amidations at positions B, D, E, and G on adenosylcobyrinic A,C-diamide. NH(2) groups are provided by glutamine, and one molecule of ATP is hydrogenolyzed for each amidation. This chain is Cobyric acid synthase, found in Nocardia farcinica (strain IFM 10152).